The following is a 631-amino-acid chain: Probable potassium transport system protein Kup (631 aa).

12 helical membrane-spanning segments follow: residues 17 to 37, 56 to 76, 109 to 129, 147 to 167, 174 to 194, 215 to 235, 256 to 276, 288 to 308, 346 to 366, 378 to 398, 403 to 423, and 428 to 448; these read IGLL…SPLY, ILGV…FKYM, MMMV…SMIT, GLDH…FLIQ, IGVL…ALGV, FFII…LALT, WFIL…ALVL, LLAP…ATII, IYIG…VIGF, VAVT…MLML, PLLA…FFAA, and IFQG…LMTT.

The protein belongs to the HAK/KUP transporter (TC 2.A.72) family.

The protein localises to the cell inner membrane. The enzyme catalyses K(+)(in) + H(+)(in) = K(+)(out) + H(+)(out). Its function is as follows. Transport of potassium into the cell. Likely operates as a K(+):H(+) symporter. In Pseudomonas syringae pv. tomato (strain ATCC BAA-871 / DC3000), this protein is Probable potassium transport system protein Kup.